The primary structure comprises 596 residues: Zinc finger E-box-binding homeobox protein zag-1 (596 aa).

Residues 24–46 (FKCPECTKAFKFKHHLKEHIRIH) form a C2H2-type 1 zinc finger. Residues 52 to 72 (FECQQCHKRFSHSGSYSSHMS) form a C2H2-type 2; degenerate zinc finger. A compositionally biased stretch (polar residues) spans 133 to 145 (LENGTSPTPTQEP). Disordered regions lie at residues 133-225 (LENG…RPLR), 324-369 (NNSL…EPEW), and 395-421 (GFVTNQEDEEEKPIKAEESPVSSGSSS). A compositionally biased stretch (basic and acidic residues) spans 165–179 (SEVKTEVKTEVKTED). The segment covering 188-200 (PAVSMSLSPAPEQ) has biased composition (polar residues). A compositionally biased stretch (low complexity) spans 201 to 216 (NGNESMNNGGSGSDGK). A DNA-binding region (homeobox) is located at residues 223–282 (PLRSRSFLNDSQVAVLQNHFKRNPFPSKYELSAVAEQIGVNKRVVQVWFQNTRAKERRSN). Residues 331 to 355 (QDERNNENTDEVMDHDGLKDGKETP) are compositionally biased toward basic and acidic residues. 2 C2H2-type zinc fingers span residues 481-503 (FSCDQCDKVFGKQSSLARHKYEH) and 509-531 (YKCDICEKAFKHKHHLTEHKRLH). A C2H2-type 5; degenerate zinc finger spans residues 537 to 560 (FQCDKCLKRFSHSGSYSQHMNHRY). The segment at 569–596 (QPASPSDVLNGGSVTVSPSSSNTPPPST) is disordered. Residues 578–590 (NGGSVTVSPSSSN) show a composition bias toward low complexity.

As to expression, expressed in the six touch receptor neurons (TRNs) but not in the FLP and PVD neurons. Expressed in the M4 cholinergic motor neuron.

It localises to the nucleus. Its function is as follows. Transcription factor. Down-regulates expression of genes involved in either the synthesis or reuptake of serotonin, dopamine and GABA. Acts as a transcriptional repressor to regulate multiple, discrete, neuron-specific aspects of terminal differentiation, including cell migration, axonal development and gene expression. Promotes touch receptor neuron differentiation by repressing the expression of egl-44 and egl-46. As egl-44 and egl-46, probably acting as a heterodimer, repress expression of zag-1 in FLP neurons, together these proteins form a bistable, negative-feedback loop that regulates the choice between neuronal fates. Required for axon guidance. Involved in the proper development of the pharynx. Required for pharynx isthmus peristalsis, probably via a role in the differentiation of the M4 cholinergic motor neuron. Directly represses its own transcription by interacting with conserved E-box sequence motifs 5'-CACCTG-3' in its own promoter. May also act as a transcriptional activator of the homeodomain ceh-28. This Caenorhabditis elegans protein is Zinc finger E-box-binding homeobox protein zag-1.